The following is a 61-amino-acid chain: Potassium channel toxin alpha-KTx 15.6 (61 aa).

An N-terminal signal peptide occupies residues 1 to 23; that stretch reads MKAFYGMLVIFILCSTCYISVDS. At Q24 the chain carries Pyrrolidone carboxylic acid. Cystine bridges form between C31-C52, C37-C57, and C41-C59.

This sequence belongs to the short scorpion toxin superfamily. Potassium channel inhibitor family. Alpha-KTx 15 subfamily. Expressed by the venom gland.

It localises to the secreted. In terms of biological role, irreversibly blocks the A-type voltage-gated potassium channels in rat cerebellum granular cells (190 nM induce 50% inhibitory effect) (IC(50)=190 nM). Also weakly inhibits Kv1.2/KCNA2 and Kv1.3/KCNA3. The chain is Potassium channel toxin alpha-KTx 15.6 from Tityus discrepans (Venezuelan scorpion).